A 404-amino-acid chain; its full sequence is Tryptophan synthase beta chain (404 aa).

An N6-(pyridoxal phosphate)lysine modification is found at lysine 90.

Belongs to the TrpB family. In terms of assembly, tetramer of two alpha and two beta chains. It depends on pyridoxal 5'-phosphate as a cofactor.

The catalysed reaction is (1S,2R)-1-C-(indol-3-yl)glycerol 3-phosphate + L-serine = D-glyceraldehyde 3-phosphate + L-tryptophan + H2O. It functions in the pathway amino-acid biosynthesis; L-tryptophan biosynthesis; L-tryptophan from chorismate: step 5/5. In terms of biological role, the beta subunit is responsible for the synthesis of L-tryptophan from indole and L-serine. This chain is Tryptophan synthase beta chain, found in Geobacillus thermodenitrificans (strain NG80-2).